Reading from the N-terminus, the 673-residue chain is Potassium-transporting ATPase ATP-binding subunit (673 aa).

The next 4 membrane-spanning stretches (helical) occupy residues 34–54 (IMFVVEVGMLLALGLTIYPDL), 65–85 (VFSIFIILLLTLVFANFSEAL), 216–236 (IALFTLLMTLTIIFLVVILTM), and 253–273 (IALAVCLIPTTIGGLLSAIGI). The active-site 4-aspartylphosphate intermediate is the D304. ATP contacts are provided by residues D341, E345, 370-377 (FTAETRMS), and K388. D511 and D515 together coordinate Mg(2+). A run of 3 helical transmembrane segments spans residues 581–601 (FAILPAMFMAAMPAMNHLNIM), 609–629 (AVLSALIFNALIIVLLIPIAM), and 649–669 (VYGLGGMIVPFIGIKLIDLII).

This sequence belongs to the cation transport ATPase (P-type) (TC 3.A.3) family. Type IA subfamily. In terms of assembly, the system is composed of three essential subunits: KdpA, KdpB and KdpC.

It is found in the cell membrane. It carries out the reaction K(+)(out) + ATP + H2O = K(+)(in) + ADP + phosphate + H(+). Functionally, part of the high-affinity ATP-driven potassium transport (or Kdp) system, which catalyzes the hydrolysis of ATP coupled with the electrogenic transport of potassium into the cytoplasm. This subunit is responsible for energy coupling to the transport system and for the release of the potassium ions to the cytoplasm. The protein is Potassium-transporting ATPase ATP-binding subunit of Staphylococcus epidermidis (strain ATCC 35984 / DSM 28319 / BCRC 17069 / CCUG 31568 / BM 3577 / RP62A).